The chain runs to 194 residues: Imidazoleglycerol-phosphate dehydratase (194 aa).

The protein belongs to the imidazoleglycerol-phosphate dehydratase family.

The protein localises to the cytoplasm. It catalyses the reaction D-erythro-1-(imidazol-4-yl)glycerol 3-phosphate = 3-(imidazol-4-yl)-2-oxopropyl phosphate + H2O. It participates in amino-acid biosynthesis; L-histidine biosynthesis; L-histidine from 5-phospho-alpha-D-ribose 1-diphosphate: step 6/9. This is Imidazoleglycerol-phosphate dehydratase from Oceanobacillus iheyensis (strain DSM 14371 / CIP 107618 / JCM 11309 / KCTC 3954 / HTE831).